The primary structure comprises 246 residues: Proteasome subunit alpha (246 aa).

Belongs to the peptidase T1A family. The 20S proteasome core is composed of 14 alpha and 14 beta subunits that assemble into four stacked heptameric rings, resulting in a barrel-shaped structure. The two inner rings, each composed of seven catalytic beta subunits, are sandwiched by two outer rings, each composed of seven alpha subunits. The catalytic chamber with the active sites is on the inside of the barrel. Has a gated structure, the ends of the cylinder being occluded by the N-termini of the alpha-subunits. Is capped by the proteasome-associated ATPase, ARC. Can also interact with the bacterial proteasome activator Bpa through the C-terminal hydrophobic-tyrosine-X motif (HbYX motif) of Bpa; Bpa forms a homooligomeric ring-like structure which stacks co-axially with the proteasomal alpha-rings. In terms of processing, pupylated at an undetermined lysine residue by the prokaryotic ubiquitin-like protein Pup with the help of the ligase PafA, which leads to its degradation by the proteasome and thereby constitutes a negative auto-regulation.

It localises to the cytoplasm. The protein operates within protein degradation; proteasomal Pup-dependent pathway. With respect to regulation, the formation of the proteasomal ATPase ARC-20S proteasome complex, likely via the docking of the C-termini of ARC into the intersubunit pockets in the alpha-rings, may trigger opening of the gate for substrate entry. Interconversion between the open-gate and close-gate conformations leads to a dynamic regulation of the 20S proteasome proteolysis activity. PPS auto-regulates its own activity via pupylation and degradation of its components. Peptidolytic activity is inhibited by N-acetyl-Leu-Leu-norleucinal (Ac-LLnL) in vitro. Component of the proteasome core, a large protease complex with broad specificity involved in protein degradation. The M.smegmatis proteasome is able to cleave oligopeptides after hydrophobic residues, thus displaying chymotrypsin-like activity. In complex with the ATPase Mpa, degrades protein targets conjugated to a prokaryotic ubiquitin-like protein (Pup). Identified substrates of the M.smegmatis proteasome are the pupylated SodA and Ino1 proteins. The Pup-proteasome system (PPS) is essential for survival under starvation; PPS likely functions to recycle amino acids under nitrogen starvation, thereby enabling the cell to maintain basal metabolic activities. This is Proteasome subunit alpha from Mycolicibacterium smegmatis (strain ATCC 700084 / mc(2)155) (Mycobacterium smegmatis).